We begin with the raw amino-acid sequence, 835 residues long: Bifunctional uridylyltransferase/uridylyl-removing enzyme (835 aa).

The interval 1–316 (MTDEAEDSGP…GGKPVAERSP (316 aa)) is uridylyltransferase. A uridylyl-removing region spans residues 317-650 (LAEGVVEQDG…SADGPEPLGV (334 aa)). In terms of domain architecture, HD spans 431-554 (VDRHLIETAV…DALATGPAAW (124 aa)). Residues 610-645 (QTEPPADSAPAPSSPSSPSFPSPLSSPSSPSSADGP) are disordered. A compositionally biased stretch (pro residues) spans 621-630 (PSSPSSPSFP). The span at 631–642 (SPLSSPSSPSSA) shows a compositional bias: low complexity. ACT domains lie at 651–736 (ELLI…LAER) and 765–835 (VIEV…SLRT).

It belongs to the GlnD family. The cofactor is Mg(2+).

It catalyses the reaction [protein-PII]-L-tyrosine + UTP = [protein-PII]-uridylyl-L-tyrosine + diphosphate. The catalysed reaction is [protein-PII]-uridylyl-L-tyrosine + H2O = [protein-PII]-L-tyrosine + UMP + H(+). Its activity is regulated as follows. Uridylyltransferase (UTase) activity is inhibited by glutamine, while glutamine activates uridylyl-removing (UR) activity. Its function is as follows. Modifies, by uridylylation and deuridylylation, the PII regulatory proteins (GlnB and homologs), in response to the nitrogen status of the cell that GlnD senses through the glutamine level. Under low glutamine levels, catalyzes the conversion of the PII proteins and UTP to PII-UMP and PPi, while under higher glutamine levels, GlnD hydrolyzes PII-UMP to PII and UMP (deuridylylation). Thus, controls uridylylation state and activity of the PII proteins, and plays an important role in the regulation of nitrogen assimilation and metabolism. The chain is Bifunctional uridylyltransferase/uridylyl-removing enzyme from Streptomyces coelicolor (strain ATCC BAA-471 / A3(2) / M145).